Reading from the N-terminus, the 256-residue chain is Small ribosomal subunit protein uS2 (256 aa).

It belongs to the universal ribosomal protein uS2 family.

The chain is Small ribosomal subunit protein uS2 from Geotalea uraniireducens (strain Rf4) (Geobacter uraniireducens).